Consider the following 146-residue polypeptide: UPF0260 protein VP2169 (146 aa).

Belongs to the UPF0260 family.

The protein is UPF0260 protein VP2169 of Vibrio parahaemolyticus serotype O3:K6 (strain RIMD 2210633).